An 873-amino-acid chain; its full sequence is Polyribonucleotide nucleotidyltransferase (873 aa).

2 residues coordinate Mg(2+): Asp521 and Asp527. The KH domain occupies 587 to 646; that stretch reads PRIITTTVPVDKIGEVIGPKGKMINQIQEDTGAEIAIEDDGTVYISSEGGEAAEKAKQII. The 73-residue stretch at 658-730 folds into the S1 motif domain; that stretch reads GETYKGTVVK…DRGKISLAIP (73 aa). A disordered region spans residues 727–873; the sequence is LAIPGFENQE…VRRDFDPFDD (147 aa). The span at 742–857 shows a compositional bias: basic and acidic residues; it reads RRSDDRPRRD…EYREGREVRH (116 aa).

Belongs to the polyribonucleotide nucleotidyltransferase family. It depends on Mg(2+) as a cofactor.

The protein localises to the cytoplasm. The catalysed reaction is RNA(n+1) + phosphate = RNA(n) + a ribonucleoside 5'-diphosphate. Its function is as follows. Involved in mRNA degradation. Catalyzes the phosphorolysis of single-stranded polyribonucleotides processively in the 3'- to 5'-direction. The polypeptide is Polyribonucleotide nucleotidyltransferase (Bifidobacterium animalis subsp. lactis (strain AD011)).